The primary structure comprises 1834 residues: MASSSLPNLVPLGPESLRPFTRASLAAIERRALEEEARLQRNKQMEIQETERNARSDLEAGKNLPLIYGDPPPEVIGIPLEDLDPYYSNKKTFIVLNKGKAIFRFSATPALYMLSPFSIIRRSAIKVLIHSLFSMFIMITILPNCVVMTMSDPPPWPIHVENTFTGINTFESLIKMLARGFCIDDFTFLRDPWNWLDFSVIMMAYLTEFVDLGNISALRTFRVLRALKTITVIPGLKTIVGALIQSVKKLSDVMILTVFCLSVFALVGLQLFMGNLRQKCVRWPQPFNDTNTTWYGNDTWYSNDTWNSNDTWSSNDMWNSHESMASNYTFDWDAYINDEGNFYFLEGAKDALLCGNSSDAGHCPEGYKCIKTGRNPNYGYTSHDTFSWAFLALFRLMIQDYWENLFQLTLRAAGKTYMIFFVVIIFLGSFYLINLILAVVTMAYAEQNEATLAEDQEKEEEFQQMMEKFQKQQEELEKAKADQALEGGEAGGDPAHSKDCNGSLDTSPGEKGPPRQSCSADSGVSDAMEELEEAHQKCPPWWYKCAHKVLIWNCCTPWVKFKNIIHLIVMDPFVDLGITICIVLNTLFMAMEHYPMTEHFDKVLTVGNLVFTGIFTAEMVLKLIALDPYEYFQQGWNVFDSIIVTLSWVELGLVNVKGLSVLRSFRLVRSLKLAKSWPTLNMFIRIIGNSGGGLGNLTLVLAIIVVNFSVVGMQLFGKNYKECVCKNASDCALPRWKMCDFFHSFLIVLRILCGEWIEPMWGFMEVAGQAMFLTVLLMVMVNGNLVDLDLFLALLLNPLNSDNLSASDEDGEMNNLQISSWPIKLGICFANAFLLGLLHGKILSPKDIMLSLGDPGEAGEAGEAEESAPEDEKKEPPPEDDDKDLKKDNHILNHMGLVDGTPTSIELDHLNFINNPYLTIHVPIASEESDLEMPTEEETDTFSEPEDGKKPLQPLDGNSSVCSTADYKPPEEDPEEQAEENPEGEQPEECFTEACVQRFPCLSVDISQGRGKMWWTLRRACFKIVEHHWFKTFNSSLILLNSGTLAFEDIYIEQRRVIRTILEYADKVFTYIFIMEMLLKWVAYGFKVYFTNAWCWLDFLIVDVSIISLVANWLGYSELGPIKSLRTLRALRPLRALSRFEGMRVVVNALLGAIPSIMNVLLVCLIFWVIFSIMGVNLFAAKIYYFINTTTSERFDISGVNNKSECESLIHTGQVRWLNVKVNYDNVGLGYLSLLQVATFKGWMDIMYSAVDSREQEEQPQYEVNIYMYLYFVIFIIFGSFFTINSLIRLIIVNFNQQKKKLGGKDIFMTEEQKKYYNAMKKLGSKKPQKPIPRPQNKIQGMVYDFVTKQVFDITIMILICLNMVTMMVETDDQSQLKVDILYNINMVFIIVFTGECVLKMFALRQNYFTVGWNIFDFVVVILSIVGLALSDLIQKYFVSPTLFRVIRLARIGRVLRLIRGAKGIRTLLFALMMSLPALFNIGLLLILVMFIYSIFGMSNFAYVKKESGIDDMFNFETFGNSIICLFEITTSAGWDGLLNPILNSGPPDCDPTLENPGTSVRGDCGNPSIGICFFCSYIIISFLIVVNMYIAIILENFNVATEESSDPLGEDDFEIFFEKWEKFGPDATQFIDYSRLSDFVDTLQEPLRIAKPNKIKLITLDLPMVPGDKIHCLDILFALTKEVLGDSGEMDALKETMEEKFMAANPSKVSYEPITTTLKRKQEEVCAIKIQRAYRRHLLQRSVKQASYMYRHSQDGSGDGAPEKEGLIANTMSKMYGRENGNSGVQNKGEERGSTGDAGPTMGLTPINPSDSALPPSPPPGLPLHPGVKESLV.

The Cytoplasmic portion of the chain corresponds to 1–131; sequence MASSSLPNLV…RSAIKVLIHS (131 aa). One copy of the I repeat lies at 113 to 448; that stretch reads MLSPFSIIRR…VVTMAYAEQN (336 aa). The helical transmembrane segment at 132 to 150 threads the bilayer; that stretch reads LFSMFIMITILPNCVVMTM. Residues 151–157 lie on the Extracellular side of the membrane; that stretch reads SDPPPWP. A helical membrane pass occupies residues 158 to 178; that stretch reads IHVENTFTGINTFESLIKMLA. Residues 179–192 lie on the Cytoplasmic side of the membrane; it reads RGFCIDDFTFLRDP. A helical transmembrane segment spans residues 193–210; it reads WNWLDFSVIMMAYLTEFV. Topologically, residues 211–216 are extracellular; that stretch reads DLGNIS. N-linked (GlcNAc...) asparagine glycosylation is present at N214. Residues 217-233 traverse the membrane as a helical segment; the sequence is ALRTFRVLRALKTITVI. The Cytoplasmic portion of the chain corresponds to 234 to 252; the sequence is PGLKTIVGALIQSVKKLSD. The chain crosses the membrane as a helical span at residues 253–272; it reads VMILTVFCLSVFALVGLQLF. Topologically, residues 273-385 are extracellular; it reads MGNLRQKCVR…PNYGYTSHDT (113 aa). A disulfide bridge links C280 with C354. N-linked (GlcNAc...) asparagine glycans are attached at residues N288, N291, N297, N303, N309, N327, and N356. Cysteines 363 and 369 form a disulfide. Residues 386–410 constitute an intramembrane region (pore-forming); that stretch reads FSWAFLALFRLMIQDYWENLFQLTL. At 411-417 the chain is on the extracellular side; that stretch reads RAAGKTY. The chain crosses the membrane as a helical span at residues 418–438; that stretch reads MIFFVVIIFLGSFYLINLILA. At 439-572 the chain is on the cytoplasmic side; sequence VVTMAYAEQN…NIIHLIVMDP (134 aa). The disordered stretch occupies residues 486–525; sequence EGGEAGGDPAHSKDCNGSLDTSPGEKGPPRQSCSADSGVS. Residues 554–826 form an II repeat; it reads CCTPWVKFKN…QISSWPIKLG (273 aa). Residues 573 to 591 form a helical membrane-spanning segment; that stretch reads FVDLGITICIVLNTLFMAM. Topologically, residues 592–602 are extracellular; that stretch reads EHYPMTEHFDK. The helical transmembrane segment at 603-622 threads the bilayer; that stretch reads VLTVGNLVFTGIFTAEMVLK. The Cytoplasmic portion of the chain corresponds to 623–636; the sequence is LIALDPYEYFQQGW. The helical transmembrane segment at 637 to 656 threads the bilayer; the sequence is NVFDSIIVTLSWVELGLVNV. At 657–658 the chain is on the extracellular side; sequence KG. Residues 659-676 traverse the membrane as a helical segment; sequence LSVLRSFRLVRSLKLAKS. The Cytoplasmic segment spans residues 677-692; the sequence is WPTLNMFIRIIGNSGG. Residues 693–711 form a helical membrane-spanning segment; sequence GLGNLTLVLAIIVVNFSVV. At 712–740 the chain is on the extracellular side; the sequence is GMQLFGKNYKECVCKNASDCALPRWKMCD. An intrachain disulfide couples C725 to C731. The segment at residues 741–761 is an intramembrane region (pore-forming); sequence FFHSFLIVLRILCGEWIEPMW. Residues 762 to 772 are Extracellular-facing; it reads GFMEVAGQAMF. A helical transmembrane segment spans residues 773 to 791; that stretch reads LTVLLMVMVNGNLVDLDLF. Topologically, residues 792–1029 are cytoplasmic; it reads LALLLNPLNS…ACFKIVEHHW (238 aa). Disordered regions lie at residues 853-886 and 929-989; these read GDPGEAGEAGEAEESAPEDEKKEPPPEDDDKDLK and SDLE…QPEE. A compositionally biased stretch (acidic residues) spans 860–869; sequence EAGEAEESAP. Over residues 870–886 the composition is skewed to basic and acidic residues; sequence EDEKKEPPPEDDDKDLK. Acidic residues-rich tracts occupy residues 929-945 and 972-989; these read SDLEMPTEEETDTFSEP and EDPEEQAEENPEGEQPEE. The III repeat unit spans residues 1010–1323; sequence RGKMWWTLRR…KKYYNAMKKL (314 aa). The chain crosses the membrane as a helical span at residues 1030–1047; it reads FKTFNSSLILLNSGTLAF. At 1048 to 1060 the chain is on the extracellular side; the sequence is EDIYIEQRRVIRT. The helical transmembrane segment at 1061–1079 threads the bilayer; the sequence is ILEYADKVFTYIFIMEMLL. The Cytoplasmic segment spans residues 1080–1093; that stretch reads KWVAYGFKVYFTNA. Residues 1094–1112 traverse the membrane as a helical segment; sequence WCWLDFLIVDVSIISLVAN. At 1113 to 1120 the chain is on the extracellular side; that stretch reads WLGYSELG. The chain crosses the membrane as a helical span at residues 1121 to 1139; it reads PIKSLRTLRALRPLRALSR. Residues 1140–1156 lie on the Cytoplasmic side of the membrane; the sequence is FEGMRVVVNALLGAIPS. A helical membrane pass occupies residues 1157–1176; it reads IMNVLLVCLIFWVIFSIMGV. Residues 1177 to 1227 are Extracellular-facing; that stretch reads NLFAAKIYYFINTTTSERFDISGVNNKSECESLIHTGQVRWLNVKVNYDNV. Residues N1188 and N1202 are each glycosylated (N-linked (GlcNAc...) asparagine). An intramembrane region (pore-forming) is located at residues 1228–1249; that stretch reads GLGYLSLLQVATFKGWMDIMYS. Over 1250-1266 the chain is Extracellular; it reads AVDSREQEEQPQYEVNI. The chain crosses the membrane as a helical span at residues 1267–1288; the sequence is YMYLYFVIFIIFGSFFTINSLI. Residues 1289 to 1351 lie on the Cytoplasmic side of the membrane; sequence RLIIVNFNQQ…MVYDFVTKQV (63 aa). The interval 1307–1309 is important for rapid channel inactivation; that stretch reads IFM. The stretch at 1332-1630 is one IV repeat; the sequence is IPRPQNKIQG…WEKFGPDATQ (299 aa). Residues 1352 to 1369 traverse the membrane as a helical segment; it reads FDITIMILICLNMVTMMV. Topologically, residues 1370-1380 are extracellular; it reads ETDDQSQLKVD. A helical membrane pass occupies residues 1381-1399; the sequence is ILYNINMVFIIVFTGECVL. At 1400-1411 the chain is on the cytoplasmic side; it reads KMFALRQNYFTV. Residues 1412–1429 traverse the membrane as a helical segment; the sequence is GWNIFDFVVVILSIVGLA. At 1430–1442 the chain is on the extracellular side; the sequence is LSDLIQKYFVSPT. A helical transmembrane segment spans residues 1443–1459; the sequence is LFRVIRLARIGRVLRLI. Residues 1460 to 1478 are Cytoplasmic-facing; sequence RGAKGIRTLLFALMMSLPA. A helical transmembrane segment spans residues 1479–1496; the sequence is LFNIGLLLILVMFIYSIF. Topologically, residues 1497–1518 are extracellular; the sequence is GMSNFAYVKKESGIDDMFNFET. The segment at residues 1519-1541 is an intramembrane region (pore-forming); sequence FGNSIICLFEITTSAGWDGLLNP. Topologically, residues 1542–1571 are extracellular; that stretch reads ILNSGPPDCDPTLENPGTSVRGDCGNPSIG. C1550 and C1565 form a disulfide bridge. A helical membrane pass occupies residues 1572–1594; that stretch reads ICFFCSYIIISFLIVVNMYIAII. The Cytoplasmic portion of the chain corresponds to 1595 to 1834; that stretch reads LENFNVATEE…LHPGVKESLV (240 aa). The 30-residue stretch at 1724–1753 folds into the IQ domain; the sequence is EEVCAIKIQRAYRRHLLQRSVKQASYMYRH. The segment at 1776–1834 is disordered; the sequence is MYGRENGNSGVQNKGEERGSTGDAGPTMGLTPINPSDSALPPSPPPGLPLHPGVKESLV.

Belongs to the sodium channel (TC 1.A.1.10) family. Nav1.4/SCN4A subfamily. As to quaternary structure, the Nav1.4 voltage-gated sodium channel consists of an ion-conducting alpha subunit SCN4A which is functional on its own and a regulatory beta subunit SCN1B. SCN1B strongly enhances the presence of SCN4A at the cell surface. SCN1B is also required for rapid channel inactivation and recovery after inactivation. It prevents the decrease of channel activity in response to repetitive, high-frequency depolarizations. Interacts with the syntrophins SNTA1, SNTB1 and SNTB2 (via PDZ domain); probably links SCN4A to the actin cytoskeleton and the extracellular matrix via the dystrophin-associated protein complex and regulates its localization in muscle cells. Interacts with TMEM233; probable regulator of the channel.

Its subcellular location is the cell membrane. It carries out the reaction Na(+)(in) = Na(+)(out). In terms of biological role, pore-forming subunit of Nav1.4, a voltage-gated sodium (Nav) channel that directly mediates the depolarizing phase of action potentials in excitable membranes. Navs, also called VGSCs (voltage-gated sodium channels) or VDSCs (voltage-dependent sodium channels), operate by switching between closed and open conformations depending on the voltage difference across the membrane. In the open conformation they allow Na(+) ions to selectively pass through the pore, along their electrochemical gradient. The influx of Na+ ions provokes membrane depolarization, initiating the propagation of electrical signals throughout cells and tissues. Highly expressed in skeletal muscles, Nav1.4 generates the action potential crucial for muscle contraction. This Equus caballus (Horse) protein is Sodium channel protein type 4 subunit alpha.